The primary structure comprises 427 residues: UPF0229 protein YeaH (427 aa).

Basic and acidic residues predominate over residues 79–90 (NDHFIQNDRIER). The tract at residues 79–110 (NDHFIQNDRIERPQGGGGGSGSGQGQASQDGE) is disordered. Gly residues predominate over residues 92 to 102 (QGGGGGSGSGQ).

It belongs to the UPF0229 family.

This chain is UPF0229 protein YeaH, found in Salmonella paratyphi B (strain ATCC BAA-1250 / SPB7).